Reading from the N-terminus, the 490-residue chain is Sushi domain-containing protein 4 (490 aa).

The segment at 1–21 (MYHGMNPSNGDGFLEQQQQQQ) is disordered. The N-terminal stretch at 1-41 (MYHGMNPSNGDGFLEQQQQQQQPQSPQRLLAVILWFQLALC) is a signal peptide. The Extracellular portion of the chain corresponds to 42–319 (FGPAQLTGGF…PSTHETLLTT (278 aa)). Sushi domains follow at residues 55 to 119 (QVCA…ICVQ), 120 to 179 (EDCR…ICQG), 178 to 239 (QGCL…RCLA), and 241 to 304 (EVCP…YCIK). 8 disulfides stabilise this stretch: Cys-57–Cys-99, Cys-85–Cys-117, Cys-122–Cys-165, Cys-147–Cys-177, Cys-180–Cys-224, Cys-210–Cys-237, Cys-243–Cys-289, and Cys-274–Cys-302. 2 N-linked (GlcNAc...) asparagine glycosylation sites follow: Asn-104 and Asn-134. Asn-192 carries an N-linked (GlcNAc...) asparagine glycan. Residues 320–340 (WKIVAFTATSVLLVLLLVILA) form a helical membrane-spanning segment. The Cytoplasmic segment spans residues 341-490 (RMFQTKFKAH…DEIPLMEEDP (150 aa)). Residues 401–490 (GCPLPVDDQS…DEIPLMEEDP (90 aa)) are disordered. The segment covering 430–456 (CDSVSGSSELLQSLYSPPRCQESTHPA) has biased composition (polar residues). The segment covering 479-490 (IADEIPLMEEDP) has biased composition (acidic residues).

As to expression, isoform 3 is the predominant isoform in all tissues except cortex, cerebellum, kidney, and breast. Isoform 1 is found primarily in the esophagus and the brain.

The protein resides in the membrane. The protein localises to the secreted. Its function is as follows. Acts as a complement inhibitor by disrupting the formation of the classical C3 convertase. Isoform 3 inhibits the classical complement pathway, while membrane-bound isoform 1 inhibits deposition of C3b via both the classical and alternative complement pathways. The sequence is that of Sushi domain-containing protein 4 (SUSD4) from Homo sapiens (Human).